The primary structure comprises 200 residues: Probable GTP-binding protein EngB (200 aa).

Residues 25 to 199 (SGYEVAFAGR…ISVLDRWYEW (175 aa)) enclose the EngB-type G domain. GTP contacts are provided by residues 33–40 (GRSNAGKS), 60–64 (GRTQL), 78–81 (DLPG), 145–148 (TKAD), and 178–180 (FSS). Residues S40 and T62 each contribute to the Mg(2+) site.

This sequence belongs to the TRAFAC class TrmE-Era-EngA-EngB-Septin-like GTPase superfamily. EngB GTPase family. Mg(2+) serves as cofactor.

Necessary for normal cell division and for the maintenance of normal septation. The sequence is that of Probable GTP-binding protein EngB from Legionella pneumophila (strain Paris).